Here is a 199-residue protein sequence, read N- to C-terminus: Recombination protein RecR (199 aa).

A C4-type zinc finger spans residues 57 to 72; sequence CNLCNNFSEQEICPLC. In terms of domain architecture, Toprim spans 80-175; the sequence is TLLCIVEMPS…QVSRIARGLP (96 aa).

It belongs to the RecR family.

Its function is as follows. May play a role in DNA repair. It seems to be involved in an RecBC-independent recombinational process of DNA repair. It may act with RecF and RecO. The sequence is that of Recombination protein RecR from Methylobacillus flagellatus (strain ATCC 51484 / DSM 6875 / VKM B-1610 / KT).